The following is a 408-amino-acid chain: Diguanylate cyclase DgcN (408 aa).

The Cytoplasmic portion of the chain corresponds to 1 to 24 (MMDNDNSLNKRPTFKRALRNISMT). A helical membrane pass occupies residues 25–45 (SIFITMMLIWLLLSVTSVLTL). Residues 46-52 (KQYAQKN) lie on the Periplasmic side of the membrane. A helical transmembrane segment spans residues 53–73 (LALTAATMTYSLEAAVVFADG). Residues 74 to 112 (PAATETLAALGQQGQFSTAEVRDKQQNILASWHYTRKDP) are Cytoplasmic-facing. A helical transmembrane segment spans residues 113–133 (GDTFSNFISHWLFPAPIIQPI). At 134 to 154 (RHNGETIGEVRLTARDSSISH) the chain is on the periplasmic side. The helical transmembrane segment at 155–175 (FIWFSLAVLTGCILLASGIAI) threads the bilayer. Residues 176-408 (TLTRHLHNGL…KHQRAEKLVR (233 aa)) lie on the Cytoplasmic side of the membrane. The region spanning 183–236 (NGLVEALKNITDVVHDVRSNRNFSRRVSEERIAEFHRFALDFNSLLDEMEEWQL) is the HAMP domain. One can recognise a GGDEF domain in the interval 278-408 (KTSALLFLDG…KHQRAEKLVR (131 aa)). A Mg(2+)-binding site is contributed by Asp-286. Positions 294, 299, and 303 each coordinate substrate. Asp-329 lines the Mg(2+) pocket. Catalysis depends on Asp-329, which acts as the Proton acceptor.

In terms of assembly, homodimer. Interacts with the cell division proteins FtsZ and ZipA. It depends on Mg(2+) as a cofactor.

Its subcellular location is the cell inner membrane. It carries out the reaction 2 GTP = 3',3'-c-di-GMP + 2 diphosphate. Its pathway is purine metabolism; 3',5'-cyclic di-GMP biosynthesis. Inhibited by YfiR, which prevents relocation to the midcell. A reductive stress signal is required to inactivate YfiR and turn on the DGC activity of DgcN. In terms of biological role, bifunctional protein that catalyzes the synthesis of cyclic-di-GMP (c-di-GMP) in response to reductive stress and then dynamically relocates to the division site to arrest cell division in response to envelope stress. In the presence of high intracellular c-di-GMP levels, and in response to envelope stress, interacts with cell division proteins and halts cell division, without disassembling the Z ring, but by blocking its further progress toward cytokinesis. Part of a network that regulates cell motility by altering levels of c-di-GMP. In Escherichia coli (strain K12), this protein is Diguanylate cyclase DgcN.